The following is a 506-amino-acid chain: Ribose import ATP-binding protein RbsA 2 (506 aa).

2 consecutive ABC transporter domains span residues 5–241 (LRLS…VGRR) and 251–498 (VRAA…TAGT). 37 to 44 (GENGAGKS) provides a ligand contact to ATP.

The protein belongs to the ABC transporter superfamily. Ribose importer (TC 3.A.1.2.1) family. The complex is composed of an ATP-binding protein (RbsA), two transmembrane proteins (RbsC) and a solute-binding protein (RbsB).

The protein localises to the cell inner membrane. It catalyses the reaction D-ribose(out) + ATP + H2O = D-ribose(in) + ADP + phosphate + H(+). Functionally, part of the ABC transporter complex RbsABC involved in ribose import. Responsible for energy coupling to the transport system. This chain is Ribose import ATP-binding protein RbsA 2, found in Burkholderia ambifaria (strain ATCC BAA-244 / DSM 16087 / CCUG 44356 / LMG 19182 / AMMD) (Burkholderia cepacia (strain AMMD)).